The sequence spans 786 residues: Endonuclease MutS2 (786 aa).

Residue 335–342 (GPNTGGKT) participates in ATP binding. One can recognise a Smr domain in the interval 711 to 786 (LDLRGERFEN…GLGVTVVELK (76 aa)).

It belongs to the DNA mismatch repair MutS family. MutS2 subfamily. In terms of assembly, homodimer. Binds to stalled ribosomes, contacting rRNA.

Its function is as follows. Endonuclease that is involved in the suppression of homologous recombination and thus may have a key role in the control of bacterial genetic diversity. In terms of biological role, acts as a ribosome collision sensor, splitting the ribosome into its 2 subunits. Detects stalled/collided 70S ribosomes which it binds and splits by an ATP-hydrolysis driven conformational change. Acts upstream of the ribosome quality control system (RQC), a ribosome-associated complex that mediates the extraction of incompletely synthesized nascent chains from stalled ribosomes and their subsequent degradation. Probably generates substrates for RQC. The protein is Endonuclease MutS2 of Bacillus thuringiensis (strain Al Hakam).